Here is an 84-residue protein sequence, read N- to C-terminus: MSILSFLLGEKKKSASVAKERLQIILAHERTGHSAPADYLPALQRELVAVISKYVKIGDQDLRVSLERQDNLEVLEVKIEIPQN.

It belongs to the MinE family.

Its function is as follows. Prevents the cell division inhibition by proteins MinC and MinD at internal division sites while permitting inhibition at polar sites. This ensures cell division at the proper site by restricting the formation of a division septum at the midpoint of the long axis of the cell. The sequence is that of Cell division topological specificity factor from Cupriavidus necator (strain ATCC 17699 / DSM 428 / KCTC 22496 / NCIMB 10442 / H16 / Stanier 337) (Ralstonia eutropha).